The following is a 275-amino-acid chain: MSLFLKDDSIQIREVWNDNLESEMALIREVVDDFPFVAMDTEFPGIVCRPVGTFKTNTEYHYETLKTNVNILKMIQLGLTFSDEKGNLPTCGTDNKYCIWQFNFREFDLESDIYATDSIELLRQSGIDFVKNNEFGIDSKRFAELLMSSGIVLNENVHWVTFHSGYDFGYLLKLLTCQNLPETQTGFFEMISVYFPRVYDIKHLMKFCNSLHGGLNKLAELLDVERVGICHQAGSDSLLTSCTFRKLQENFFIGSMEKYSGVLYGLGVENGQIVH.

A divalent metal cation-binding residues include aspartate 40, glutamate 42, aspartate 167, and aspartate 236.

It belongs to the CAF1 family. In terms of assembly, component of the CCR4-NOT complex, at least composed of CRR4 and CAF1 proteins. A divalent metal cation serves as cofactor.

The protein resides in the nucleus. It is found in the cytoplasm. It catalyses the reaction Exonucleolytic cleavage of poly(A) to 5'-AMP.. Its function is as follows. Ubiquitous transcription factor required for a diverse set of processes. It is a component of the CCR4 complex involved in the control of gene expression. The sequence is that of Probable CCR4-associated factor 1 homolog 7 (CAF1-7) from Arabidopsis thaliana (Mouse-ear cress).